The chain runs to 327 residues: 2-oxoisovalerate dehydrogenase subunit beta (327 aa).

Residues glutamate 29, 58 to 60 (LAE), glutamine 82, and 86 to 89 (FIMP) each bind thiamine diphosphate. Substrate-binding positions include 83–86 (FADF) and histidine 129. Histidine 129 serves as the catalytic Proton acceptor.

Heterotetramer of two alpha and two beta chains. Directly associated with ODBA in the E1 complex. Thiamine diphosphate serves as cofactor.

It carries out the reaction N(6)-[(R)-lipoyl]-L-lysyl-[protein] + 3-methyl-2-oxobutanoate + H(+) = N(6)-[(R)-S(8)-2-methylpropanoyldihydrolipoyl]-L-lysyl-[protein] + CO2. The branched-chain alpha-keto dehydrogenase complex catalyzes the overall conversion of alpha-keto acids to acyl-CoA and CO(2). It contains multiple copies of three enzymatic components: branched-chain alpha-keto acid decarboxylase (E1), lipoamide acyltransferase (E2) and lipoamide dehydrogenase (E3). This is 2-oxoisovalerate dehydrogenase subunit beta (bfmBAB) from Bacillus subtilis (strain 168).